Consider the following 724-residue polypeptide: Acyl-coenzyme A oxidase 2 (724 aa).

Residues 1 to 23 form a disordered region; sequence MALISNLKDEYDHPTKTDPDTNP. Basic and acidic residues predominate over residues 7 to 21; the sequence is LKDEYDHPTKTDPDT.

This sequence belongs to the acyl-CoA oxidase family. Requires FAD as cofactor.

It localises to the peroxisome. The enzyme catalyses a 2,3-saturated acyl-CoA + O2 = a (2E)-enoyl-CoA + H2O2. Its pathway is lipid metabolism; peroxisomal fatty acid beta-oxidation. This chain is Acyl-coenzyme A oxidase 2 (POX2), found in Candida maltosa (Yeast).